The following is a 463-amino-acid chain: L-seryl-tRNA(Sec) selenium transferase (463 aa).

The residue at position 295 (Lys-295) is an N6-(pyridoxal phosphate)lysine.

It belongs to the SelA family. Homodecamer; pentamer of dimers. Binds only one seryl-tRNA(Sec) per dimer. Pyridoxal 5'-phosphate is required as a cofactor.

The protein resides in the cytoplasm. It catalyses the reaction L-seryl-tRNA(Sec) + selenophosphate + H(+) = L-selenocysteinyl-tRNA(Sec) + phosphate. It functions in the pathway aminoacyl-tRNA biosynthesis; selenocysteinyl-tRNA(Sec) biosynthesis; selenocysteinyl-tRNA(Sec) from L-seryl-tRNA(Sec) (bacterial route): step 1/1. Converts seryl-tRNA(Sec) to selenocysteinyl-tRNA(Sec) required for selenoprotein biosynthesis. This Salmonella enteritidis PT4 (strain P125109) protein is L-seryl-tRNA(Sec) selenium transferase.